Reading from the N-terminus, the 263-residue chain is Imidazole glycerol phosphate synthase subunit HisF (263 aa).

Residues D11 and D131 contribute to the active site.

It belongs to the HisA/HisF family. As to quaternary structure, heterodimer of HisH and HisF.

The protein resides in the cytoplasm. The enzyme catalyses 5-[(5-phospho-1-deoxy-D-ribulos-1-ylimino)methylamino]-1-(5-phospho-beta-D-ribosyl)imidazole-4-carboxamide + L-glutamine = D-erythro-1-(imidazol-4-yl)glycerol 3-phosphate + 5-amino-1-(5-phospho-beta-D-ribosyl)imidazole-4-carboxamide + L-glutamate + H(+). Its pathway is amino-acid biosynthesis; L-histidine biosynthesis; L-histidine from 5-phospho-alpha-D-ribose 1-diphosphate: step 5/9. IGPS catalyzes the conversion of PRFAR and glutamine to IGP, AICAR and glutamate. The HisF subunit catalyzes the cyclization activity that produces IGP and AICAR from PRFAR using the ammonia provided by the HisH subunit. The sequence is that of Imidazole glycerol phosphate synthase subunit HisF from Deinococcus geothermalis (strain DSM 11300 / CIP 105573 / AG-3a).